A 383-amino-acid polypeptide reads, in one-letter code: MQNRHHARLLPSSALLSHEAAAGVMLMAASAIGMVFANSIWQASYEYWLNIETGPLTMRGWINDALMALFFLLAGLEIKREILYGHLSHWSQRLLPGVAAIGGMVVPAIIYVAFNHSGEALRGWAIPTATDIAFALGVLALAGSRVPGILKVFLTALAIVDDLGAVIVIALFYTGTLSVLPGAGVAAILGLLLMLNRQGVRTLFPYLLAGVPLWWLTLKSGIHPTVAGVGLALLIPAGHDEASPLMRLEHMLSWPVRFVILPLFGFANAGISLHGVTVGQMLSPLTLGVGAALMLGKPLGVLGAVSILQLSGASGFPPYITWRHRIGIAFLCGIGFTMSLFIAILAFPGTAAVNQIKLGILSGSMLSGLCGYILLRGPAVADR.

A run of 11 helical transmembrane segments spans residues 21–41, 56–76, 94–114, 123–143, 152–172, 175–195, 202–222, 258–278, 287–307, 326–346, and 355–375; these read AAGV…NSIW, LTMR…LAGL, LLPG…YVAF, GWAI…ALAG, VFLT…IALF, GTLS…LLML, TLFP…KSGI, FVIL…GVTV, LGVG…AVSI, IGIA…AILA, and QIKL…YILL.

Belongs to the NhaA Na(+)/H(+) (TC 2.A.33) antiporter family.

The protein localises to the cell inner membrane. The enzyme catalyses Na(+)(in) + 2 H(+)(out) = Na(+)(out) + 2 H(+)(in). Its function is as follows. Na(+)/H(+) antiporter that extrudes sodium in exchange for external protons. In Granulibacter bethesdensis (strain ATCC BAA-1260 / CGDNIH1), this protein is Na(+)/H(+) antiporter NhaA.